Here is a 499-residue protein sequence, read N- to C-terminus: Basic immunoglobulin-like variable motif-containing protein (499 aa).

Disordered regions lie at residues 1-29 (MPNI…RNNL), 153-172 (LKSR…ERKA), and 428-465 (GNLR…RSFS). Positions 153–162 (LKSRSGVNKQ) are enriched in polar residues. Residues 444–453 (PKSESEDNVS) are compositionally biased toward basic and acidic residues.

This sequence belongs to the BIVM family.

Its subcellular location is the cytoplasm. It localises to the nucleus. The sequence is that of Basic immunoglobulin-like variable motif-containing protein (bivm) from Xenopus tropicalis (Western clawed frog).